We begin with the raw amino-acid sequence, 373 residues long: GDP-mannose 4,6-dehydratase (373 aa).

Residues 10-15 (GITGQD), 65-66 (DL), 87-91 (LGAQS), and Tyr102 contribute to the NADP(+) site. Residue Thr134 is part of the active site. Residues Glu136 and Tyr158 each act as nucleophile in the active site. Positions 162, 188, and 193 each coordinate NADP(+).

It belongs to the NAD(P)-dependent epimerase/dehydratase family. GDP-mannose 4,6-dehydratase subfamily. The cofactor is NADP(+).

The catalysed reaction is GDP-alpha-D-mannose = GDP-4-dehydro-alpha-D-rhamnose + H2O. In terms of biological role, catalyzes the conversion of GDP-D-mannose to GDP-4-dehydro-6-deoxy-D-mannose. This Vibrio cholerae serotype O1 (strain ATCC 39315 / El Tor Inaba N16961) protein is GDP-mannose 4,6-dehydratase.